Reading from the N-terminus, the 951-residue chain is MEKTYNPQDIEQPLYEHWEKQGYFKPNGDESQESFCIMIPPPNVTGSLHMGHAFQQTIMDTMIRYQRMQGKNTLWQVGTDHAGIATQMVVERKIAAEEGKTRHDYGREAFIDKIWEWKAESGGTITRQMRRLGNSVDWERERFTMDEGLSNAVKEVFVRLYKEDLIYRGKRLVNWDPKLRTAISDLEVENRESKGSMWHIRYPLADGAKTADGKDYLVVATTRPETLLGDTGVAVNPEDPRYKDLIGKYVILPLVNRRIPIVGDEHADMEKGTGCVKITPAHDFNDYEVGKRHALPMINILTFDGDIRESAQVFDTKGNESDVYSSEIPAEFQKLERFAARKAVVAAVDALGLLEEIKPHDLTVPYGDRGGVVIEPMLTDQWYVRADVLAKPAVEAVENGDIQFVPKQYENMYFSWMRDIQDWCISRQLWWGHRIPAWYDEAGNVYVGRNEEEVRKENNLGADVALRQDEDVLDTWFSSALWTFSTLGWPENTDALRQFHPTSVMVSGFDIIFFWIARMIMMTMHFIKDENGKPQVPFHTVYMTGLIRDDEGQKMSKSKGNVIDPLDMVDGISLPELLEKRTGNMMQPQLADKIRKRTEKQFPNGIEPHGTDALRFTLAALASTGRDINWDMKRLEGYRNFCNKLWNASRFVLMNTEGQDCGFNGGEMTLSLADRWILAEFNQTIKAYREALDSFRFDIAAGILYEFTWNQFCDWYLELTKPVMNGGTEAELRGTRHTLVTVLEGLLRLAHPIIPFITETIWQRVKVLCGITADTIMLQPFPQYDASQVDEAALADTEWLKQAIVAVRNIRAEMNIAPGKPLELLLRGCSADAERRVNENRGFLQTLARLESITVLPADDKGPVSVTKIIDGAELLIPMAGLINKEDELARLAKEVAKIEGEISRIENKLANEGFVARAPEAVIAKEREKLEGYAEAKAKLIEQQAVIAAL.

Positions 42-52 (PNVTGSLHMGH) match the 'HIGH' region motif. The 'KMSKS' region signature appears at 554–558 (KMSKS). Lys-557 contributes to the ATP binding site. The stretch at 880–944 (AGLINKEDEL…AEAKAKLIEQ (65 aa)) forms a coiled coil.

Belongs to the class-I aminoacyl-tRNA synthetase family. ValS type 1 subfamily. As to quaternary structure, monomer.

It is found in the cytoplasm. It catalyses the reaction tRNA(Val) + L-valine + ATP = L-valyl-tRNA(Val) + AMP + diphosphate. In terms of biological role, catalyzes the attachment of valine to tRNA(Val). As ValRS can inadvertently accommodate and process structurally similar amino acids such as threonine, to avoid such errors, it has a 'posttransfer' editing activity that hydrolyzes mischarged Thr-tRNA(Val) in a tRNA-dependent manner. This is Valine--tRNA ligase from Shigella boydii serotype 4 (strain Sb227).